Reading from the N-terminus, the 196-residue chain is ECF RNA polymerase sigma factor SigM (196 aa).

Residues 39 to 105 (LFRRHHRQLH…ACLDRLRRAK (67 aa)) are sigma-70 factor domain-2. The short motif at 63 to 66 (DALQ) is the Interaction with polymerase core subunit RpoC element. The interval 130–181 (AVQRALMRLPVEQRAAVVAVDMQGYSIADTARMLGVAEGTVKSRCARARARL) is sigma-70 factor domain-4. A DNA-binding region (H-T-H motif) is located at residues 156–175 (IADTARMLGVAEGTVKSRCA).

The protein belongs to the sigma-70 factor family. ECF subfamily. In terms of assembly, interacts transiently with the RNA polymerase catalytic core formed by RpoA, RpoB, RpoC and RpoZ (2 alpha, 1 beta, 1 beta' and 1 omega subunit) to form the RNA polymerase holoenzyme that can initiate transcription. Interacts (via sigma-70 factor domain 4) with anti-sigma-M factor RsmA.

Functionally, sigma factors are initiation factors that promote the attachment of RNA polymerase to specific initiation sites and are then released. Extracytoplasmic function (ECF) sigma factors are held in an inactive form by an anti-sigma factor until released by regulated intramembrane proteolysis. The sequence is that of ECF RNA polymerase sigma factor SigM (sigM) from Mycobacterium tuberculosis (strain ATCC 35801 / TMC 107 / Erdman).